The sequence spans 881 residues: Valine--tRNA ligase (881 aa).

The short motif at 76–86 (PTVSGSLHIGH) is the 'HIGH' region element. The disordered stretch occupies residues 493–526 (DSPILPDESQLPVDPSSQAPEGYTEDQRGKPGGF). The short motif at 608 to 612 (KMSKS) is the 'KMSKS' region element. An ATP-binding site is contributed by Lys611.

It belongs to the class-I aminoacyl-tRNA synthetase family. ValS type 2 subfamily. Monomer.

The protein resides in the cytoplasm. It carries out the reaction tRNA(Val) + L-valine + ATP = L-valyl-tRNA(Val) + AMP + diphosphate. In terms of biological role, catalyzes the attachment of valine to tRNA(Val). As ValRS can inadvertently accommodate and process structurally similar amino acids such as threonine, to avoid such errors, it has a 'posttransfer' editing activity that hydrolyzes mischarged Thr-tRNA(Val) in a tRNA-dependent manner. This Thermobifida fusca (strain YX) protein is Valine--tRNA ligase.